The following is a 408-amino-acid chain: Succinylornithine transaminase (408 aa).

N6-(pyridoxal phosphate)lysine is present on Lys252.

It belongs to the class-III pyridoxal-phosphate-dependent aminotransferase family. AstC subfamily. It depends on pyridoxal 5'-phosphate as a cofactor.

The catalysed reaction is N(2)-succinyl-L-ornithine + 2-oxoglutarate = N-succinyl-L-glutamate 5-semialdehyde + L-glutamate. The protein operates within amino-acid degradation; L-arginine degradation via AST pathway; L-glutamate and succinate from L-arginine: step 3/5. Functionally, catalyzes the transamination of N(2)-succinylornithine and alpha-ketoglutarate into N(2)-succinylglutamate semialdehyde and glutamate. Can also act as an acetylornithine aminotransferase. In Salmonella agona (strain SL483), this protein is Succinylornithine transaminase.